The primary structure comprises 182 residues: Adenine phosphoribosyltransferase (182 aa).

It belongs to the purine/pyrimidine phosphoribosyltransferase family. In terms of assembly, homodimer.

It localises to the cytoplasm. The enzyme catalyses AMP + diphosphate = 5-phospho-alpha-D-ribose 1-diphosphate + adenine. Its pathway is purine metabolism; AMP biosynthesis via salvage pathway; AMP from adenine: step 1/1. Catalyzes a salvage reaction resulting in the formation of AMP, that is energically less costly than de novo synthesis. The protein is Adenine phosphoribosyltransferase of Streptomyces galbus.